An 812-amino-acid polypeptide reads, in one-letter code: Phosphoenolpyruvate synthase (812 aa).

Residue histidine 430 is the Tele-phosphohistidine intermediate of the active site. Substrate is bound by residues arginine 520, arginine 588, glutamate 690, glycine 711, serine 712, asparagine 713, and aspartate 714. Glutamate 690 serves as a coordination point for Mg(2+). A Mg(2+)-binding site is contributed by aspartate 714. Cysteine 761 acts as the Proton donor in catalysis.

Belongs to the PEP-utilizing enzyme family. It depends on Mg(2+) as a cofactor.

It catalyses the reaction pyruvate + ATP + H2O = phosphoenolpyruvate + AMP + phosphate + 2 H(+). It functions in the pathway carbohydrate biosynthesis; gluconeogenesis. Functionally, catalyzes the phosphorylation of pyruvate to phosphoenolpyruvate. In Helicobacter pylori (strain ATCC 700392 / 26695) (Campylobacter pylori), this protein is Phosphoenolpyruvate synthase (ppsA).